Reading from the N-terminus, the 348-residue chain is MFEDQTFEAIMERMLNSISADIDTREGSVIYNALAPAAAELAKSYIWLDTVLELVFSDTAQGEFLDRRAAEAGIERTAATKAVRAGEFTSGVTIPVGSRFYVDNLYFQYTADGTLICETPGEAGNANLTGRNLLSLDTIPGLETAIVKEILIPGREEEGDDSLRERYFTRVRREAVSANKMHYKEWAEEVDGVGKAKIFPLWNGEGTVKIVVTNANLEPASPILIQKVKDYIDPEPGQGEGQAPIGAVVTVESAVWKEVEISAEVLPEINHSIDEVKSEIEEGVLNFFKKMAFEDNVIRLSQINNIVYNSPSVSDYSNIQINGTSENLVLSDVEIPKLGQVKIIEQTR.

The protein belongs to the Mu gp47/PBSX XkdT family.

The sequence is that of Phage-like element PBSX protein XkdT (xkdT) from Bacillus subtilis (strain 168).